Here is a 417-residue protein sequence, read N- to C-terminus: NADH-quinone oxidoreductase subunit D (417 aa).

It belongs to the complex I 49 kDa subunit family. NDH-1 is composed of 14 different subunits. Subunits NuoB, C, D, E, F, and G constitute the peripheral sector of the complex.

The protein localises to the cell inner membrane. The catalysed reaction is a quinone + NADH + 5 H(+)(in) = a quinol + NAD(+) + 4 H(+)(out). NDH-1 shuttles electrons from NADH, via FMN and iron-sulfur (Fe-S) centers, to quinones in the respiratory chain. The immediate electron acceptor for the enzyme in this species is believed to be ubiquinone. Couples the redox reaction to proton translocation (for every two electrons transferred, four hydrogen ions are translocated across the cytoplasmic membrane), and thus conserves the redox energy in a proton gradient. The sequence is that of NADH-quinone oxidoreductase subunit D from Francisella tularensis subsp. novicida (strain U112).